The primary structure comprises 211 residues: ATP-dependent Clp protease proteolytic subunit (211 aa).

The active-site Nucleophile is the S107. H132 is a catalytic residue.

It belongs to the peptidase S14 family. Fourteen ClpP subunits assemble into 2 heptameric rings which stack back to back to give a disk-like structure with a central cavity, resembling the structure of eukaryotic proteasomes.

The protein localises to the cytoplasm. It carries out the reaction Hydrolysis of proteins to small peptides in the presence of ATP and magnesium. alpha-casein is the usual test substrate. In the absence of ATP, only oligopeptides shorter than five residues are hydrolyzed (such as succinyl-Leu-Tyr-|-NHMec, and Leu-Tyr-Leu-|-Tyr-Trp, in which cleavage of the -Tyr-|-Leu- and -Tyr-|-Trp bonds also occurs).. Cleaves peptides in various proteins in a process that requires ATP hydrolysis. Has a chymotrypsin-like activity. Plays a major role in the degradation of misfolded proteins. This chain is ATP-dependent Clp protease proteolytic subunit, found in Xanthobacter autotrophicus (strain ATCC BAA-1158 / Py2).